We begin with the raw amino-acid sequence, 372 residues long: NAD(P)H-quinone oxidoreductase subunit 1 (372 aa).

A run of 8 helical transmembrane segments spans residues 29 to 49, 97 to 117, 130 to 150, 176 to 196, 204 to 224, 254 to 274, 308 to 328, and 347 to 367; these read WIPFPSFLMIIGATVGVLVVV, WLFTLGPVLVVLPVFVSYLIV, VGIFFWIALSSIAPIGLLMAG, LALSVLAIVMMSNSLSTIDIV, ILGWNIWRQPVGFFIFWIAAL, FALFYLGSYVNLVLSALVFAI, SLGITMTVLKAYFLVFIAVLM, and FLLPVSLVNLLLTAALKLAFP.

The protein belongs to the complex I subunit 1 family. As to quaternary structure, NDH-1 is composed of at least 11 different subunits.

The protein resides in the cellular thylakoid membrane. The enzyme catalyses a plastoquinone + NADH + (n+1) H(+)(in) = a plastoquinol + NAD(+) + n H(+)(out). The catalysed reaction is a plastoquinone + NADPH + (n+1) H(+)(in) = a plastoquinol + NADP(+) + n H(+)(out). NDH-1 shuttles electrons from an unknown electron donor, via FMN and iron-sulfur (Fe-S) centers, to quinones in the respiratory and/or the photosynthetic chain. The immediate electron acceptor for the enzyme in this species is believed to be plastoquinone. Couples the redox reaction to proton translocation, and thus conserves the redox energy in a proton gradient. This Crocosphaera subtropica (strain ATCC 51142 / BH68) (Cyanothece sp. (strain ATCC 51142)) protein is NAD(P)H-quinone oxidoreductase subunit 1.